The primary structure comprises 126 residues: Glycerol dehydrogenase small subunit (126 aa).

Helical transmembrane passes span 13–33 (WLTLVLGVVIILVGLFFVIAG), 41–61 (GSVYYVICGIPLVAGGVFMLM), 67–87 (AFLYLGALAYTWVWSLWEVGF), and 92–112 (LLPRDFGPTLLGILVALTIPV).

It is found in the cell membrane. The enzyme catalyses glycerol + A = dihydroxyacetone + AH2. Functionally, catalyzes the oxidation of glycerol to glycerone. Also acts, more slowly, on a number of other polyols including D-sorbitol, D-arabinitol, D-mannitol, meso-erythritol, adonitol and propylene glycol. The protein is Glycerol dehydrogenase small subunit (sldB) of Gluconobacter oxydans (strain 621H) (Gluconobacter suboxydans).